The sequence spans 634 residues: MSYVASNIQVLKGLEAVRKRPGMYIGSVSINGLHHLVYEVVDNSIDEALAGFCDKIEVVINSDNSVTVNDNGRGIPTDVHEEEGISALELVLTKLHSGGKFNKGTYKVSGGLHGVGISVVNALSSFLAVIVSRDGKLFKQTYSRGIPTSEVDIIGVSSARGTKVTFLADSEIFETLEYDFETLSKRLRELAFLNDKIRISIEDRRSGKEKFLEFYFEGGIKAFVDYITNNSKNIQNEPYFIEGSCDDVIVSVGLKWTEGYSDHILSFVNNINTREGGTHVAGFKSGFLKAMSEAFRDSKISKKDVPSLTLDDFKEGLTAVISIKIPEPQFEGQTKGKLGNSYVKKIVETIVHDGLLKVIDDNLLEVDIILNKAIRAARAREAARKARESERKKSAFESLALPGKLADCASKNPAEREIYIVEGDSAGGSAKMGRDRFSQAILPLWGKMLNVEKTREDKVITNDKLIPIIASLGAGVGKTFYIEKLRYHKIIIMADADVDGSHIRTLLLTFFFRYMRELIENGHVYIAMPPLYKLKYENREHYFYDDLEKEAFLGSIETGKRDKVSLQRYKGLGEMNPTQLWETTMNPATRKMKLIKINDAIQAEKIFVTLMGDDVEPRREFIEQNALDVVNLDV.

The 115-residue stretch at 416-530 folds into the Toprim domain; sequence REIYIVEGDS…NGHVYIAMPP (115 aa). E422, D495, and D497 together coordinate Mg(2+).

It belongs to the type II topoisomerase GyrB family. As to quaternary structure, heterotetramer, composed of two GyrA and two GyrB chains. In the heterotetramer, GyrA contains the active site tyrosine that forms a transient covalent intermediate with DNA, while GyrB binds cofactors and catalyzes ATP hydrolysis. It depends on Mg(2+) as a cofactor. Requires Mn(2+) as cofactor. Ca(2+) is required as a cofactor.

It localises to the cytoplasm. The catalysed reaction is ATP-dependent breakage, passage and rejoining of double-stranded DNA.. Functionally, a type II topoisomerase that negatively supercoils closed circular double-stranded (ds) DNA in an ATP-dependent manner to modulate DNA topology and maintain chromosomes in an underwound state. Negative supercoiling favors strand separation, and DNA replication, transcription, recombination and repair, all of which involve strand separation. Also able to catalyze the interconversion of other topological isomers of dsDNA rings, including catenanes and knotted rings. Type II topoisomerases break and join 2 DNA strands simultaneously in an ATP-dependent manner. In Borrelia hermsii, this protein is DNA gyrase subunit B.